The chain runs to 1019 residues: Vacuolar membrane protease (1019 aa).

The Cytoplasmic segment spans residues 1–69 (MFLEINFYST…DRIPTVVGFR (69 aa)). Residues 70 to 90 (VIPTTVLVLLTYLTIFTLVIV) traverse the membrane as a helical segment. The Vacuolar segment spans residues 91 to 404 (TDWLPEPPKN…AELVIFYLND (314 aa)). N-linked (GlcNAc...) asparagine glycosylation is present at Asn-158. Zn(2+) contacts are provided by His-195 and Asp-207. The active-site Proton acceptor is Glu-239. Glu-240 lines the Zn(2+) pocket. The N-linked (GlcNAc...) asparagine glycan is linked to Asn-256. Zn(2+)-binding residues include Glu-265 and His-341. A helical transmembrane segment spans residues 405 to 425 (LLIYNVVSLVVGPISLIFFVV). The Cytoplasmic segment spans residues 426–466 (CEYVLRNERARQPNGHPVSRPSVLEWLKQRSWLRALWRRSK). A helical membrane pass occupies residues 467-487 (FWIALVITIALQALLVWGYLA). Over 488 to 497 (FNSFTVYSSP) the chain is Vacuolar. A helical transmembrane segment spans residues 498–518 (YLVLISFFSLAYLSLVIPLTF). Residues 519 to 539 (TFNQTQSPTAKYIAPEREKHT) are Cytoplasmic-facing. A helical membrane pass occupies residues 540 to 560 (LLIQVYIFTWILLLFSTIAVA). Residues 561 to 565 (RAQVG) lie on the Vacuolar side of the membrane. Residues 566 to 586 (GLYFVTAWNTGVWIACLLAAV) form a helical membrane-spanning segment. Residues 587 to 651 (EGMMLPVPQG…ASLRKPQEGG (65 aa)) lie on the Cytoplasmic side of the membrane. Positions 603-634 (HSAHHHHHHEHEEDQDADDDDREQRQPPTEAT) are disordered. Residues 652–672 (VVGWWIVHLLLTIPAPVLLIA) traverse the membrane as a helical segment. Residues 673 to 692 (QMGSLLLDSLPQTLADGSPA) lie on the Vacuolar side of the membrane. A helical membrane pass occupies residues 693 to 713 (YVVYAAASLTAVLLAVPLTPF). The Cytoplasmic segment spans residues 714–719 (SGKLHR). A helical transmembrane segment spans residues 720–740 (GLFFLFFLSFLIVTAYLWLAF). The Vacuolar segment spans residues 741–1019 (PFSSADPLKV…LVEAWSPFSV (279 aa)). N-linked (GlcNAc...) asparagine glycosylation occurs at Asn-774.

It belongs to the peptidase M28 family. Zn(2+) is required as a cofactor.

The protein localises to the vacuole membrane. May be involved in vacuolar sorting and osmoregulation. The chain is Vacuolar membrane protease from Laccaria bicolor (strain S238N-H82 / ATCC MYA-4686) (Bicoloured deceiver).